The primary structure comprises 33 residues: Cecropin-C (33 aa).

At Lys21 the chain carries 5-hydroxylysine.

As to quaternary structure, monomer. Hemolymph.

The protein resides in the secreted. Functionally, cecropins have lytic and antibacterial activity against several Gram-positive and Gram-negative bacteria. Also has activity against fungi. The chain is Cecropin-C from Heliothis virescens (Tobacco budworm moth).